The primary structure comprises 507 residues: Glutamyl-tRNA(Gln) amidotransferase subunit A, mitochondrial (507 aa).

The tract at residues 29 to 51 (THPPEPIPPPPPPAPSSSPSPKQ) is disordered. The segment covering 31–46 (PPEPIPPPPPPAPSSS) has biased composition (pro residues). Active-site charge relay system residues include lysine 57 and serine 135. Catalysis depends on serine 159, which acts as the Acyl-ester intermediate.

This sequence belongs to the amidase family. GatA subfamily. Subunit of the heterotrimeric GatCAB amidotransferase (AdT) complex, composed of A, B and C subunits.

Its subcellular location is the mitochondrion. The enzyme catalyses L-glutamyl-tRNA(Gln) + L-glutamine + ATP + H2O = L-glutaminyl-tRNA(Gln) + L-glutamate + ADP + phosphate + H(+). Allows the formation of correctly charged Gln-tRNA(Gln) through the transamidation of misacylated Glu-tRNA(Gln) in the mitochondria. The reaction takes place in the presence of glutamine and ATP through an activated gamma-phospho-Glu-tRNA(Gln). This Podospora anserina (strain S / ATCC MYA-4624 / DSM 980 / FGSC 10383) (Pleurage anserina) protein is Glutamyl-tRNA(Gln) amidotransferase subunit A, mitochondrial.